The sequence spans 423 residues: Serine--tRNA ligase (423 aa).

Position 230–232 (230–232 (TAE)) interacts with L-serine. 261 to 263 (RSE) is a binding site for ATP. Glu-284 is an L-serine binding site. 348-351 (EISS) contacts ATP. An L-serine-binding site is contributed by Ser-384.

This sequence belongs to the class-II aminoacyl-tRNA synthetase family. Type-1 seryl-tRNA synthetase subfamily. Homodimer. The tRNA molecule binds across the dimer.

Its subcellular location is the cytoplasm. The enzyme catalyses tRNA(Ser) + L-serine + ATP = L-seryl-tRNA(Ser) + AMP + diphosphate + H(+). It carries out the reaction tRNA(Sec) + L-serine + ATP = L-seryl-tRNA(Sec) + AMP + diphosphate + H(+). The protein operates within aminoacyl-tRNA biosynthesis; selenocysteinyl-tRNA(Sec) biosynthesis; L-seryl-tRNA(Sec) from L-serine and tRNA(Sec): step 1/1. Catalyzes the attachment of serine to tRNA(Ser). Is also able to aminoacylate tRNA(Sec) with serine, to form the misacylated tRNA L-seryl-tRNA(Sec), which will be further converted into selenocysteinyl-tRNA(Sec). The protein is Serine--tRNA ligase of Syntrophobacter fumaroxidans (strain DSM 10017 / MPOB).